The chain runs to 201 residues: Lipopolysaccharide core heptose(II)-phosphate phosphatase (201 aa).

Residues 1–35 (MLAFTLRFIKNKRYFAILAGALVIIAGLTSQHAWS) form the signal peptide.

It belongs to the phosphoglycerate mutase family. Ais subfamily.

The protein resides in the periplasm. The protein operates within bacterial outer membrane biogenesis; lipopolysaccharide metabolism. In terms of biological role, catalyzes the dephosphorylation of heptose(II) of the outer membrane lipopolysaccharide core. In Salmonella enteritidis PT4 (strain P125109), this protein is Lipopolysaccharide core heptose(II)-phosphate phosphatase.